The sequence spans 412 residues: Putative membrane protein 337L (412 aa).

Asn171, Asn186, Asn247, and Asn271 each carry an N-linked (GlcNAc...) asparagine; by host glycan. Residues 387 to 407 traverse the membrane as a helical segment; the sequence is VLITGIAVTGVAVLLFLLLMF.

This sequence belongs to the IIV-6 337L family.

The protein localises to the virion membrane. This Acheta domesticus (House cricket) protein is Putative membrane protein 337L.